The chain runs to 394 residues: DNA replication and repair protein RecF (394 aa).

Residue 30–37 (GSNGQGKT) coordinates ATP.

The protein belongs to the RecF family.

It is found in the cytoplasm. The RecF protein is involved in DNA metabolism; it is required for DNA replication and normal SOS inducibility. RecF binds preferentially to single-stranded, linear DNA. It also seems to bind ATP. The chain is DNA replication and repair protein RecF from Cutibacterium acnes (strain DSM 16379 / KPA171202) (Propionibacterium acnes).